Here is a 950-residue protein sequence, read N- to C-terminus: UvrABC system protein A (950 aa).

Residue 42 to 49 (GLSGSGKS) coordinates ATP. Residues 262 to 289 (CPVCSYSLPELEPRLFSFNNPMGSCPTC) form a C4-type zinc finger. ABC transporter domains lie at 319–596 (WDKR…EKSV) and 616–945 (VNPG…KYLK). Residue 649-656 (GVSGSGKS) participates in ATP binding. The C4-type zinc finger occupies 748–774 (CEACQGDGVIKVEMHFLPDVYVPCEVC).

It belongs to the ABC transporter superfamily. UvrA family. In terms of assembly, forms a heterotetramer with UvrB during the search for lesions.

It is found in the cytoplasm. Functionally, the UvrABC repair system catalyzes the recognition and processing of DNA lesions. UvrA is an ATPase and a DNA-binding protein. A damage recognition complex composed of 2 UvrA and 2 UvrB subunits scans DNA for abnormalities. When the presence of a lesion has been verified by UvrB, the UvrA molecules dissociate. This is UvrABC system protein A from Neisseria gonorrhoeae.